The chain runs to 279 residues: Very long chain fatty acid elongase 1 (279 aa).

The residue at position 1 (Met-1) is an N-acetylmethionine. 7 helical membrane-spanning segments follow: residues 23–43 (PLMG…YFIL), 61–81 (FMIV…YEFL), 110–130 (VAWL…IFIL), 137–154 (VTFL…SWWW), 176–196 (VVMY…PYLW), 203–223 (AIQL…YFMP), and 231–251 (IIIH…SNFW). The short motif at 275–279 (KVKAN) is the Di-lysine motif element.

It belongs to the ELO family. ELOVL1 subfamily. As to quaternary structure, interacts with LASS2, TECR and HSD17B12. Interacts with TECR. As to expression, expressed in a broad variety of tissues. Highly expressed in stomach, lung, kidney, skin and intestine. Moderately expressed in white adipose tissue, liver, spleen, brain, brown adipose tissue, heart and muscle. Weakly expressed in testis.

The protein localises to the endoplasmic reticulum membrane. It catalyses the reaction a very-long-chain acyl-CoA + malonyl-CoA + H(+) = a very-long-chain 3-oxoacyl-CoA + CO2 + CoA. The enzyme catalyses eicosanoyl-CoA + malonyl-CoA + H(+) = 3-oxodocosanoyl-CoA + CO2 + CoA. It carries out the reaction docosanoyl-CoA + malonyl-CoA + H(+) = 3-oxotetracosanoyl-CoA + CO2 + CoA. The catalysed reaction is tetracosanoyl-CoA + malonyl-CoA + H(+) = 3-oxohexacosanoyl-CoA + CO2 + CoA. It catalyses the reaction (11Z)-eicosenoyl-CoA + malonyl-CoA + H(+) = 3-oxo-(13Z)-docosenoyl-CoA + CO2 + CoA. The enzyme catalyses (13Z)-docosenoyl-CoA + malonyl-CoA + H(+) = 3-oxo-(15Z)-tetracosenoyl-CoA + CO2 + CoA. The protein operates within lipid metabolism; fatty acid biosynthesis. Functionally, catalyzes the first and rate-limiting reaction of the four reactions that constitute the long-chain fatty acids elongation cycle. This endoplasmic reticulum-bound enzymatic process allows the addition of 2 carbons to the chain of long- and very long-chain fatty acids (VLCFAs) per cycle. Condensing enzyme that exhibits activity toward saturated and monounsaturated acyl-CoA substrates, with the highest activity towards C22:0 acyl-CoA. May participate in the production of both saturated and monounsaturated VLCFAs of different chain lengths that are involved in multiple biological processes as precursors of membrane lipids and lipid mediators. Important for saturated C24:0 and monounsaturated C24:1 sphingolipid synthesis. Indirectly inhibits RPE65 via production of VLCFAs. This chain is Very long chain fatty acid elongase 1, found in Mus musculus (Mouse).